A 205-amino-acid polypeptide reads, in one-letter code: Latherin (205 aa).

A disulfide bridge links Cys-133 with Cys-176.

It belongs to the BPI/LBP/Plunc superfamily. Plunc family. Monomer.

It localises to the secreted. Functionally, major protein in sweat, has surfactant properties. The protein is Latherin (LATH) of Equus quagga burchellii (Burchell's zebra).